Reading from the N-terminus, the 348-residue chain is Phosphoribosylformylglycinamidine cyclo-ligase (348 aa).

The protein belongs to the AIR synthase family.

Its subcellular location is the cytoplasm. The enzyme catalyses 2-formamido-N(1)-(5-O-phospho-beta-D-ribosyl)acetamidine + ATP = 5-amino-1-(5-phospho-beta-D-ribosyl)imidazole + ADP + phosphate + H(+). It functions in the pathway purine metabolism; IMP biosynthesis via de novo pathway; 5-amino-1-(5-phospho-D-ribosyl)imidazole from N(2)-formyl-N(1)-(5-phospho-D-ribosyl)glycinamide: step 2/2. The chain is Phosphoribosylformylglycinamidine cyclo-ligase from Geotalea daltonii (strain DSM 22248 / JCM 15807 / FRC-32) (Geobacter daltonii).